The sequence spans 240 residues: Small ribosomal subunit protein uS3 (240 aa).

One can recognise a KH type-2 domain in the interval Ile39–Pro109. The segment at Ala219 to Gly240 is disordered. Basic and acidic residues predominate over residues Gln231–Gly240.

The protein belongs to the universal ribosomal protein uS3 family. As to quaternary structure, part of the 30S ribosomal subunit. Forms a tight complex with proteins S10 and S14.

Binds the lower part of the 30S subunit head. Binds mRNA in the 70S ribosome, positioning it for translation. This is Small ribosomal subunit protein uS3 from Synechocystis sp. (strain ATCC 27184 / PCC 6803 / Kazusa).